The following is a 243-amino-acid chain: MRFDVLTLFPEIPEAFFKTSIMAKAVEKGIISCNLVNIRDFAFDKHRSCDDIVYGGGAGMLLLPEPLSLALDSVNASSKRVIYVTPSGKPFNQELAKEFSSEEALVFVCGRYEGIDQRIIDEYVDDEISVGDYVMSSGELAALVIIDAVYRLIDGVISGESLEEESFSGFLLEYPQYTRPRNFKGKEVPEVLLSGHHLNIHKWRLKKRIEKTLKTRPDLIEKARNCGMWTKEAEKILKEFENE.

S-adenosyl-L-methionine is bound by residues G110 and 130–135 (VGDYVM).

It belongs to the RNA methyltransferase TrmD family. Homodimer.

The protein resides in the cytoplasm. The enzyme catalyses guanosine(37) in tRNA + S-adenosyl-L-methionine = N(1)-methylguanosine(37) in tRNA + S-adenosyl-L-homocysteine + H(+). Specifically methylates guanosine-37 in various tRNAs. The chain is tRNA (guanine-N(1)-)-methyltransferase from Treponema denticola (strain ATCC 35405 / DSM 14222 / CIP 103919 / JCM 8153 / KCTC 15104).